A 78-amino-acid chain; its full sequence is MNYKIGIMSLLVITSIIFLFLVPDKVEAQKECIGPCDMFTDCQAACVGIRKGYNYGQCVAWKPKDDDPFTCCCYKLTP.

The N-terminal stretch at 1–28 (MNYKIGIMSLLVITSIIFLFLVPDKVEA) is a signal peptide. Disulfide bonds link cysteine 32–cysteine 73, cysteine 36–cysteine 58, cysteine 42–cysteine 71, and cysteine 46–cysteine 72.

This sequence belongs to the DEFL family.

It localises to the secreted. This chain is Defensin-like protein 74 (LCR43), found in Arabidopsis thaliana (Mouse-ear cress).